The following is a 437-amino-acid chain: tRNA-2-methylthio-N(6)-dimethylallyladenosine synthase (437 aa).

One can recognise an MTTase N-terminal domain in the interval 1-115; the sequence is MKVYIETMGC…ISQVIHKEKA (115 aa). Residues C10, C46, C78, C148, C152, and C155 each contribute to the [4Fe-4S] cluster site. The Radical SAM core domain maps to 134–367; sequence KKAQIRSLLN…QNRHKEILEE (234 aa). The TRAM domain occupies 370-436; sequence KLEVGKTHVV…KGRLMATTKG (67 aa).

Belongs to the methylthiotransferase family. MiaB subfamily. In terms of assembly, monomer. The cofactor is [4Fe-4S] cluster.

Its subcellular location is the cytoplasm. It catalyses the reaction N(6)-dimethylallyladenosine(37) in tRNA + (sulfur carrier)-SH + AH2 + 2 S-adenosyl-L-methionine = 2-methylsulfanyl-N(6)-dimethylallyladenosine(37) in tRNA + (sulfur carrier)-H + 5'-deoxyadenosine + L-methionine + A + S-adenosyl-L-homocysteine + 2 H(+). Catalyzes the methylthiolation of N6-(dimethylallyl)adenosine (i(6)A), leading to the formation of 2-methylthio-N6-(dimethylallyl)adenosine (ms(2)i(6)A) at position 37 in tRNAs that read codons beginning with uridine. The protein is tRNA-2-methylthio-N(6)-dimethylallyladenosine synthase of Helicobacter pylori (strain J99 / ATCC 700824) (Campylobacter pylori J99).